We begin with the raw amino-acid sequence, 128 residues long: Leucine-rich single-pass membrane protein 1 (128 aa).

Serine 24 is modified (phosphoserine). Residues 66-86 traverse the membrane as a helical segment; that stretch reads GLLLVLTVSLALVFFAIFLII. Residues 90–111 are a coiled coil; the sequence is NQMEDVSRRLTAEGKDIDDLKK.

The protein resides in the membrane. This Mus musculus (Mouse) protein is Leucine-rich single-pass membrane protein 1 (Lsmem1).